A 193-amino-acid chain; its full sequence is Acyl carrier protein phosphodiesterase (193 aa).

This sequence belongs to the AcpH family.

It carries out the reaction holo-[ACP] + H2O = apo-[ACP] + (R)-4'-phosphopantetheine + H(+). In terms of biological role, converts holo-ACP to apo-ACP by hydrolytic cleavage of the phosphopantetheine prosthetic group from ACP. The sequence is that of Acyl carrier protein phosphodiesterase from Salmonella dublin (strain CT_02021853).